We begin with the raw amino-acid sequence, 480 residues long: Probable G-protein coupled receptor Mth-like 6 (480 aa).

Positions 1 to 20 (MLLNILAIILVFVISSQSEA) are cleaved as a signal peptide. Residues 21-202 (VIPGCDYFDT…LEHVYIPKSM (182 aa)) lie on the Extracellular side of the membrane. 4 cysteine pairs are disulfide-bonded: Cys-25-Cys-78, Cys-80-Cys-85, Cys-89-Cys-179, and Cys-90-Cys-101. N-linked (GlcNAc...) asparagine glycosylation is present at Asn-40. Asn-160 and Asn-170 each carry an N-linked (GlcNAc...) asparagine glycan. The chain crosses the membrane as a helical span at residues 203 to 225 (PAVPQVGTISMVGCILTIAVYLY). At 226-231 (IKKLRN) the chain is on the cytoplasmic side. A helical membrane pass occupies residues 232–254 (LLGKCFICYVFCKFVQYLIWAGG). Residues 255 to 263 (DLNLWNNIC) lie on the Extracellular side of the membrane. The chain crosses the membrane as a helical span at residues 264 to 283 (SLAGYTNYFFALASHFWLSV). The Cytoplasmic segment spans residues 284-303 (MSHQIWKNLRLINRDERSYH). Residues 304–326 (FLIYNIYGWGTPAIMTAITYLVD) traverse the membrane as a helical segment. Over 327 to 356 (WAWEDRPDKLNWIPGVGLYRCWINTYDWSA) the chain is Extracellular. A helical membrane pass occupies residues 357 to 379 (MIYLYGPMLILSLFNVVTFILTV). Over 380 to 405 (NHIMKIKSSVKSSTQQQRKCIQNNDF) the chain is Cytoplasmic. A helical membrane pass occupies residues 406-428 (LLYLRLSVMMGVTGISEVITYFV). Residues 429-437 (KRHKFWRQV) are Extracellular-facing. Residues 438-457 (LRVPNFFHLGSGIVVFVLFI) form a helical membrane-spanning segment. The Cytoplasmic portion of the chain corresponds to 458 to 480 (LKRSTFQMIMERISGPRRQQPAS).

This sequence belongs to the G-protein coupled receptor 2 family. Mth subfamily.

The protein localises to the cell membrane. The sequence is that of Probable G-protein coupled receptor Mth-like 6 (mthl6) from Drosophila melanogaster (Fruit fly).